The following is a 233-amino-acid chain: Large ribosomal subunit protein uL1 (233 aa).

It belongs to the universal ribosomal protein uL1 family. In terms of assembly, part of the 50S ribosomal subunit.

Its function is as follows. Binds directly to 23S rRNA. The L1 stalk is quite mobile in the ribosome, and is involved in E site tRNA release. Functionally, protein L1 is also a translational repressor protein, it controls the translation of the L11 operon by binding to its mRNA. This Geobacillus sp. (strain WCH70) protein is Large ribosomal subunit protein uL1.